Reading from the N-terminus, the 479-residue chain is Solute carrier family 46 member 2 (479 aa).

At 1–23 the chain is on the cytoplasmic side; that stretch reads MGPGGTCPWSSRLSGFRVRTWIE. A helical transmembrane segment spans residues 24 to 44; the sequence is PVVASTQVAGSLYDAGLLLVV. Topologically, residues 45–80 are extracellular; it reads KESFKSEAGGSSNYSANQSLVEYQEDQQQKAISNFN. Residues Asn57 and Asn61 are each glycosylated (N-linked (GlcNAc...) asparagine). Residues 81-101 form a helical membrane-spanning segment; sequence IIYNLVLGLTPLLSAYGLGWL. Residues 102-110 lie on the Cytoplasmic side of the membrane; that stretch reads SDRYHRKIS. Residues 111 to 131 traverse the membrane as a helical segment; the sequence is ICTAMLGFLLSRIGLLLKVML. Residues 132 to 140 lie on the Extracellular side of the membrane; it reads DWPVEVMYG. A helical membrane pass occupies residues 141 to 161; the sequence is AAALNGLCGSFSAYWSGVMAL. Residues 162 to 174 are Cytoplasmic-facing; the sequence is GSLGCSEGRRSVR. A helical membrane pass occupies residues 175–195; the sequence is LILIDLVLGLAGFSGSMASGH. Topologically, residues 196–207 are extracellular; that stretch reads LFKQIVGHSAQG. Residues 208–228 traverse the membrane as a helical segment; it reads LLLTACSVGCAAFALFYSLFV. The Cytoplasmic segment spans residues 229 to 281; sequence LKVPESKPNKVHPTVDTVSGMMGTYRTLDPDQQDKQNVPRNPRTPGKGKSSQR. Positions 255–277 are disordered; sequence TLDPDQQDKQNVPRNPRTPGKGK. Residues 282–302 traverse the membrane as a helical segment; the sequence is EVVALLFVGAIIYDLAAVGTV. The Extracellular segment spans residues 303-321; that stretch reads DVMALFVLKEPLHWNQVQL. The chain crosses the membrane as a helical span at residues 322-342; that stretch reads GYGMASGYIIFITSFLGVLVF. Topologically, residues 343–348 are cytoplasmic; sequence SRCFRD. The chain crosses the membrane as a helical span at residues 349–369; that stretch reads TTMIIIGMLSFGSGALLLAFV. Residues 370–371 lie on the Extracellular side of the membrane; that stretch reads KE. A helical membrane pass occupies residues 372 to 392; it reads TYMFYIARAIMLFALIPITTI. Over 393 to 407 the chain is Cytoplasmic; it reads RSAMSKLIKDSSYGK. Residues 408 to 428 form a helical membrane-spanning segment; the sequence is IFVILQLCLTLTGVVTSTIYN. At 429 to 441 the chain is on the extracellular side; the sequence is KIYQLTLDKFIGT. The helical transmembrane segment at 442 to 462 threads the bilayer; that stretch reads CFVLSSFLSFLAIVPIGVVAY. At 463–479 the chain is on the cytoplasmic side; sequence KQVPRSQQGECAEKQRS.

This sequence belongs to the major facilitator superfamily. SLC46A family. Post-translationally, glycosylated. In terms of tissue distribution, expressed on cortical epithelial cells in the thymus. Mainly expressed in the thymic cortex and is highly enriched in SCID thymus. Also expressed in lymph nodes, heart, fetal liver, brain, spleen, intestine and kidney, but not in adult liver, skin, skeletal muscle and lung. Expressed in skin epidermis.

Its subcellular location is the endosome membrane. The protein resides in the cell membrane. It carries out the reaction N-acetyl-beta-D-glucosaminyl-(1-&gt;4)-1,6-anhydro-N-acetyl-beta-D-muramoyl-L-alanyl-gamma-D-glutamyl-meso-2,6-diaminopimeloyl-D-alanine(out) + n H(+)(out) = N-acetyl-beta-D-glucosaminyl-(1-&gt;4)-1,6-anhydro-N-acetyl-beta-D-muramoyl-L-alanyl-gamma-D-glutamyl-meso-2,6-diaminopimeloyl-D-alanine(in) + n H(+)(in). The enzyme catalyses L-alanyl-gamma-D-glutamyl-meso-2,6-diaminopimelate(out) + n H(+)(out) = L-alanyl-gamma-D-glutamyl-meso-2,6-diaminopimelate(in) + n H(+)(in). The catalysed reaction is N-acetyl-D-muramoyl-L-alanyl-D-isoglutamine(out) + n H(+)(out) = N-acetyl-D-muramoyl-L-alanyl-D-isoglutamine(in) + n H(+)(in). It catalyses the reaction 2',3'-cGAMP(out) + n H(+)(out) = 2',3'-cGAMP(in) + n H(+)(in). It carries out the reaction 3',3'-cGAMP(out) + n H(+)(out) = 3',3'-cGAMP(in) + n H(+)(in). With respect to regulation, down-regulated by the anti-inflammatory drug methotrexate. Proton-coupled transporter that delivers pathogen-associated or danger-associated molecular patterns to cytosolic pattern recognition receptors as part of the innate immune response to microbes or tissue injury. Has selectivity toward muropeptides that contain the amino acid diaminopimelic acid (DAP-type peptidoglycan muropeptides) including Tri-DAP and tracheal toxin (TCT), common in Gram-negative bacteria and Gram-positive bacilli. In the context of immune recognition of skin microbiota, shuttles bacterial muropeptides across the endolysosomal membranes into the cytosol for recognition by NOD1, triggering MYD88-dependent secretion of IL1A and neutrophil recruitment in a pyroptosis-type inflammatory process. To a lesser extent and redundantly, transports muramyl dipeptides derived from most bacterial proteoglycans, eliciting NOD2 receptor activation and downstream inflammatory responses. Postulated to function as an importer of cyclic GMP-AMP dinucleotides (cGAMPs) in monocyte and macrophage cell lineages. Selectively imports cGAMPs derived from pathogenic bacteria such as 3'3'-cGAMP thus providing for differential immune recognition of pathogenic versus commensal bacteria. During tumorigenesis may transport extracellular tumor-derived 2'3'-cGAMP across the plasma membrane of M1-polarized macrophages to activate the anti-tumoral stimulator of interferon genes (STING) pathway. The transport mechanism, its electrogenicity and stoichiometry remain to be elucidated. The polypeptide is Solute carrier family 46 member 2 (Mus musculus (Mouse)).